The chain runs to 132 residues: Agouti-signaling protein (132 aa).

The signal sequence occupies residues 1–22 (MDVTRLLLATLLVFLCFFTADS). Asparagine 39 carries an N-linked (GlcNAc...) asparagine glycan. A disordered region spans residues 62–85 (ISRKEAEKKRSSKKEASMKTVARP). Positions 63 to 78 (SRKEAEKKRSSKKEAS) are enriched in basic and acidic residues. 5 cysteine pairs are disulfide-bonded: cysteine 93/cysteine 108, cysteine 100/cysteine 114, cysteine 107/cysteine 125, cysteine 111/cysteine 132, and cysteine 116/cysteine 123. Residues 93–132 (CVATRNSCKPPAPACCDPCASCQCRFFRSACSCRVLSLNC) enclose the Agouti domain.

The protein localises to the secreted. Functionally, involved in the regulation of melanogenesis. The binding of ASP to MC1R precludes alpha-MSH initiated signaling and thus blocks production of cAMP, leading to a down-regulation of eumelanogenesis (brown/black pigment) and thus increasing synthesis of pheomelanin (yellow/red pigment). The chain is Agouti-signaling protein (ASIP) from Pongo pygmaeus (Bornean orangutan).